The chain runs to 312 residues: uncharacterized protein (312 aa).

This sequence belongs to the asfivirus CP312R family.

The protein resides in the virion. This is an uncharacterized protein from African swine fever virus (isolate Tick/South Africa/Pretoriuskop Pr4/1996) (ASFV).